Reading from the N-terminus, the 421-residue chain is Testin (421 aa).

The PET domain occupies 92–199 (MILTNPVAAK…GDVKLPCEMD (108 aa)). The interval 133 to 164 (EKQPVAGSEGAQYRKKQLAKQLPAHDQDPSKC) is disordered. A compositionally biased stretch (basic and acidic residues) spans 155–164 (PAHDQDPSKC). LIM zinc-binding domains are found at residues 234–297 (YSCY…CDSE), 299–359 (PRCA…NHAV), and 362–421 (QGCH…KMMS).

Belongs to the prickle / espinas / testin family. As to quaternary structure, interacts via LIM domain 1 with ZYX. Interacts (via LIM domain 3) with ENAH and VASP. Interacts with ALKBH4, talin, actin, alpha-actinin, GRIP1 and PXN. Interacts (via LIM domain 2) with ACTL7A (via N-terminus). Heterodimer with ACTL7A; the heterodimer interacts with ENAH to form a heterotrimer.

The protein localises to the cytoplasm. Its subcellular location is the cell junction. It localises to the focal adhesion. Functionally, scaffold protein that may play a role in cell adhesion, cell spreading and in the reorganization of the actin cytoskeleton. Plays a role in the regulation of cell proliferation. May act as a tumor suppressor. This Papio anubis (Olive baboon) protein is Testin (TES).